A 280-amino-acid polypeptide reads, in one-letter code: UDP-3-O-acyl-N-acetylglucosamine deacetylase (280 aa).

3 residues coordinate Zn(2+): histidine 79, histidine 237, and aspartate 241. Histidine 264 functions as the Proton donor in the catalytic mechanism.

Belongs to the LpxC family. Zn(2+) serves as cofactor.

It carries out the reaction a UDP-3-O-[(3R)-3-hydroxyacyl]-N-acetyl-alpha-D-glucosamine + H2O = a UDP-3-O-[(3R)-3-hydroxyacyl]-alpha-D-glucosamine + acetate. The protein operates within glycolipid biosynthesis; lipid IV(A) biosynthesis; lipid IV(A) from (3R)-3-hydroxytetradecanoyl-[acyl-carrier-protein] and UDP-N-acetyl-alpha-D-glucosamine: step 2/6. Catalyzes the hydrolysis of UDP-3-O-myristoyl-N-acetylglucosamine to form UDP-3-O-myristoylglucosamine and acetate, the committed step in lipid A biosynthesis. This is UDP-3-O-acyl-N-acetylglucosamine deacetylase from Chlamydia caviae (strain ATCC VR-813 / DSM 19441 / 03DC25 / GPIC) (Chlamydophila caviae).